The following is a 1119-amino-acid chain: Protein translocase subunit SecA (1119 aa).

Residues glutamine 175, glycine 213–threonine 217, and aspartate 714 each bind ATP. Residues cysteine 1106, cysteine 1108, cysteine 1117, and cysteine 1118 each contribute to the Zn(2+) site.

The protein belongs to the SecA family. As to quaternary structure, monomer and homodimer. Part of the essential Sec protein translocation apparatus which comprises SecA, SecYEG and auxiliary proteins SecDF. Other proteins may also be involved. Zn(2+) serves as cofactor.

It localises to the cell inner membrane. The protein resides in the cytoplasm. The enzyme catalyses ATP + H2O + cellular proteinSide 1 = ADP + phosphate + cellular proteinSide 2.. Functionally, part of the Sec protein translocase complex. Interacts with the SecYEG preprotein conducting channel. Has a central role in coupling the hydrolysis of ATP to the transfer of proteins into and across the cell membrane, serving as an ATP-driven molecular motor driving the stepwise translocation of polypeptide chains across the membrane. In Azobacteroides pseudotrichonymphae genomovar. CFP2, this protein is Protein translocase subunit SecA.